We begin with the raw amino-acid sequence, 471 residues long: Delta(24(24(1)))-sterol reductase erg4A (471 aa).

N15 is a glycosylation site (N-linked (GlcNAc...) asparagine). Helical transmembrane passes span 33 to 53 (VTLIMIGFPLLMYYMYIGAVL), 89 to 109 (WTIYWTFLILEGAGYLYLPGV), 130 to 150 (AVSSWYLTIAAALILHFTGVL), 159 to 179 (FGPLMSVAICSGIFVSIVAYI), 216 to 236 (MFFEVRIPWFILFLLTLGTAL), 244 to 264 (LVAGEVLFLLMAHFLYANACA), 282 to 302 (GFMLIFWNLAGVPMSYCHCTL), and 313 to 333 (HWNPWVLAVWAVAYLFMYWVW). Residues K340, R344, L380, and 392 to 393 (HY) each bind NADP(+). Residues 397 to 417 (VFFAISWGLITGFNSPFPWFY) traverse the membrane as a helical segment. Residues D432, 436-440 (CRERY), and Y447 contribute to the NADP(+) site.

This sequence belongs to the ERG4/ERG24 family.

The protein resides in the endoplasmic reticulum membrane. It catalyses the reaction ergosterol + NADP(+) = ergosta-5,7,22,24(28)-tetraen-3beta-ol + NADPH + H(+). Its pathway is steroid metabolism; ergosterol biosynthesis. Its function is as follows. Delta(24(24(1)))-sterol reductase; part of the third module of ergosterol biosynthesis pathway that includes the late steps of the pathway. Catalyzes the last step of ergosterol biosynthesis by converting ergosta-5,7,22,24(28)-tetraen-3beta-ol into ergosterol. The third module or late pathway involves the ergosterol synthesis itself through consecutive reactions that mainly occur in the endoplasmic reticulum (ER) membrane. Firstly, the squalene synthase erg9 catalyzes the condensation of 2 farnesyl pyrophosphate moieties to form squalene, which is the precursor of all steroids. Squalene synthase is crucial for balancing the incorporation of farnesyl diphosphate (FPP) into sterol and nonsterol isoprene synthesis. Secondly, squalene is converted into lanosterol by the consecutive action of the squalene epoxidase erg1 and the lanosterol synthase erg7. Then, the delta(24)-sterol C-methyltransferase erg6 methylates lanosterol at C-24 to produce eburicol. Eburicol is the substrate of the sterol 14-alpha demethylase encoded by cyp51A and cyp51B, to yield 4,4,24-trimethyl ergosta-8,14,24(28)-trienol. The C-14 reductase erg24 then reduces the C14=C15 double bond which leads to 4,4-dimethylfecosterol. A sequence of further demethylations at C-4, involving the C-4 demethylation complex containing the C-4 methylsterol oxidases erg25A or erg25B, the sterol-4-alpha-carboxylate 3-dehydrogenase erg26 and the 3-keto-steroid reductase erg27, leads to the production of fecosterol via 4-methylfecosterol. The C-8 sterol isomerase erg2 then catalyzes the reaction which results in unsaturation at C-7 in the B ring of sterols and thus converts fecosterol to episterol. The sterol-C5-desaturase erg3B then catalyzes the introduction of a C-5 double bond in the B ring to produce 5-dehydroepisterol. The 2 other sterol-C5-desaturases, erg3A and erg3C, seem to be less important in ergosterol biosynthesis. The C-22 sterol desaturase erg5 further converts 5-dehydroepisterol into ergosta-5,7,22,24(28)-tetraen-3beta-ol by forming the C-22(23) double bond in the sterol side chain. Finally, ergosta-5,7,22,24(28)-tetraen-3beta-ol is substrate of the C-24(28) sterol reductases erg4A and erg4B to produce ergosterol. Possible alternative sterol biosynthetic pathways might exist from fecosterol to ergosterol, depending on the activities of the erg3 isoforms. The polypeptide is Delta(24(24(1)))-sterol reductase erg4A (Aspergillus fumigatus (strain ATCC MYA-4609 / CBS 101355 / FGSC A1100 / Af293) (Neosartorya fumigata)).